A 295-amino-acid polypeptide reads, in one-letter code: sn-glycerol-3-phosphate transport system permease protein UgpA (295 aa).

At 1–11 the chain is on the cytoplasmic side; sequence MSSSRPVFRSR. The chain crosses the membrane as a helical span at residues 12–32; the sequence is WLPYLLVAPQLIITVIFFIWP. The Periplasmic segment spans residues 33–80; that stretch reads AGEALWYSLQSVDPFGFSSQFVGLDNFVALFHDSYYIDSFWTTIKFST. In terms of domain architecture, ABC transmembrane type-1 spans 76–284; it reads IKFSTFVTVS…FLVIVLTVVQ (209 aa). A helical membrane pass occupies residues 81 to 101; the sequence is FVTVSGLLVSLFFAALVEYIV. Residues 102–109 are Cytoplasmic-facing; the sequence is RGSRFYQT. A helical transmembrane segment spans residues 110 to 130; that stretch reads LMLLPYAVAPAVAAVLWIFLF. Residues 131–156 are Periplasmic-facing; it reads NPGRGLITHFLAEFGYDWNHAQNSGQ. A helical membrane pass occupies residues 157-177; that stretch reads AMFLVVFASVWKQISYNFLFF. The Cytoplasmic segment spans residues 178–207; sequence YAALQSIPRSLIEAAAIDGVGPIRRFFKIA. A helical membrane pass occupies residues 208–228; sequence LPLIAPVSFFLLVVNLVYAFF. Topologically, residues 229–262 are periplasmic; sequence DTFPVIDAATSGGPVQAITTLIYKIYREGFTGLD. A helical membrane pass occupies residues 263–283; sequence LASSAAQSVVLMFLVIVLTVV. The Cytoplasmic portion of the chain corresponds to 284-295; the sequence is QFRYVESKVRYQ.

The protein belongs to the binding-protein-dependent transport system permease family. UgpAE subfamily. In terms of assembly, the complex is composed of two ATP-binding proteins (UgpC), two transmembrane proteins (UgpA and UgpE) and a solute-binding protein (UgpB).

Its subcellular location is the cell inner membrane. Part of the ABC transporter complex UgpBAEC involved in sn-glycerol-3-phosphate (G3P) import. Probably responsible for the translocation of the substrate across the membrane. In Shigella dysenteriae serotype 1 (strain Sd197), this protein is sn-glycerol-3-phosphate transport system permease protein UgpA (ugpA).